Reading from the N-terminus, the 111-residue chain is UPF0060 membrane protein NFA_36830 (111 aa).

Helical transmembrane passes span 7 to 27 (LVLF…VWQG), 33 to 53 (GLWW…VATF), 62 to 82 (VLAA…VLVD), and 91 to 111 (LLGA…PRGG).

This sequence belongs to the UPF0060 family.

Its subcellular location is the cell membrane. This is UPF0060 membrane protein NFA_36830 from Nocardia farcinica (strain IFM 10152).